A 391-amino-acid polypeptide reads, in one-letter code: MGRLKQCWSSLLVLAVLVIGTGAVPITYLQSAVAKGAVCLDGSAPAYHFDKGFGSGVNNWIVHMEGGGWCTDVASCNERKGTMKGSSKFMNKDFGFSGILGGKQSTNPDFYNWNRIKVRYCDGSSFTGNVEAVNPANKLFFRGARVWRAVVDDLMAKGMKNAQNAILSGCSAGALAAILHCDTFRAILPRTASVKCVSDAGYFIHGKDITGGSYIQSYYSKVVALHGSAKSLPVSCTSKMKPELCFFPQYVVPSMRTPLFVINAAFDSWQIKNVLAPTAVDKGKEWKNCKLDLKKCSAAQLKTVQGFRDQMMRALSPVHSTPSRGLFLDSCHAHCQGGSAASWSGDKGPQVANTRIAKAVGNWFYGRSAFQKIDCPSPTCNPTCPAISTED.

The N-terminal stretch at Met1–Ala23 is a signal peptide. Active-site charge relay system residues include Ser171, Asp267, and His334.

This sequence belongs to the pectinacetylesterase family.

It is found in the secreted. It localises to the cell wall. Functionally, hydrolyzes acetyl esters in homogalacturonan regions of pectin. In type I primary cell wall, galacturonic acid residues of pectin can be acetylated at the O-2 and O-3 positions. Decreasing the degree of acetylation of pectin gels in vitro alters their physical properties. This is Pectin acetylesterase 7 from Arabidopsis thaliana (Mouse-ear cress).